Consider the following 493-residue polypeptide: Galactose-1-phosphate uridylyltransferase (493 aa).

Belongs to the galactose-1-phosphate uridylyltransferase type 2 family.

The protein localises to the cytoplasm. It catalyses the reaction alpha-D-galactose 1-phosphate + UDP-alpha-D-glucose = alpha-D-glucose 1-phosphate + UDP-alpha-D-galactose. Its pathway is carbohydrate metabolism; galactose metabolism. This Lactococcus lactis subsp. lactis (strain IL1403) (Streptococcus lactis) protein is Galactose-1-phosphate uridylyltransferase (galT).